Consider the following 138-residue polypeptide: Basic phospholipase A2 trimucrotoxin (138 aa).

Residues M1–G16 form the signal peptide. 7 disulfides stabilise this stretch: C42–C131, C44–C60, C59–C111, C65–C138, C66–C104, C73–C97, and C91–C102. Residues Y43, G45, and G47 each contribute to the Ca(2+) site. The active site involves H63. Residue D64 coordinates Ca(2+). D105 is an active-site residue.

Belongs to the phospholipase A2 family. Group II subfamily. D49 sub-subfamily. In terms of assembly, homodimer. Ca(2+) serves as cofactor. In terms of tissue distribution, expressed by the venom gland.

Its subcellular location is the secreted. It carries out the reaction a 1,2-diacyl-sn-glycero-3-phosphocholine + H2O = a 1-acyl-sn-glycero-3-phosphocholine + a fatty acid + H(+). Its function is as follows. Snake venom phospholipase A2 (PLA2) that displays edema-inducing activities, as well as presynaptic neurotoxicity and low myotoxicity. PLA2 catalyzes the calcium-dependent hydrolysis of the 2-acyl groups in 3-sn-phosphoglycerides. The sequence is that of Basic phospholipase A2 trimucrotoxin from Protobothrops mucrosquamatus (Taiwan habu).